Reading from the N-terminus, the 150-residue chain is Transcriptional repressor NrdR (150 aa).

The disordered stretch occupies residues 1–22 (MKCPYCSAPDSRVVNSRPSDDG). Residues 3–34 (CPYCSAPDSRVVNSRPSDDGASIRRRRECLRC) fold into a zinc finger. The region spanning 49–136 (LMVLKRGGQR…VYRDFDSLER (88 aa)) is the ATP-cone domain.

It belongs to the NrdR family. Zn(2+) is required as a cofactor.

Its function is as follows. Negatively regulates transcription of bacterial ribonucleotide reductase nrd genes and operons by binding to NrdR-boxes. In Deinococcus geothermalis (strain DSM 11300 / CIP 105573 / AG-3a), this protein is Transcriptional repressor NrdR.